Reading from the N-terminus, the 315-residue chain is MPEGKYSYHEPVLLEEAIASLNCRGGGIYVDGTVGGGGHAALILERSAPDGFLLGMDVDGDALQAAEKRLMPFGRRKTLVKANYADMRKVLADLKILQVDGILLDLGVSSHQLDAAERGFSLLKDAPLDMRMDSEAGRSAYDVVNTCSERELKDIIRKYGEEIMAGRIARAIAEKRKDTPIKSTTQLAAIVAGALPGGFRHKKIHPATRTFQALRIYINNELSNLHRAIFDSTDCLKPGGRFSIISFHSLEDSLVKNGFRSLEKGCICPADMPVCACGQSPRLKVITRKPISPCRDEVEANPRSRSARLRTAERI.

Residues 37–39, Asp57, Leu91, Asp105, and Gln112 contribute to the S-adenosyl-L-methionine site; that span reads GGH.

Belongs to the methyltransferase superfamily. RsmH family.

It localises to the cytoplasm. The enzyme catalyses cytidine(1402) in 16S rRNA + S-adenosyl-L-methionine = N(4)-methylcytidine(1402) in 16S rRNA + S-adenosyl-L-homocysteine + H(+). In terms of biological role, specifically methylates the N4 position of cytidine in position 1402 (C1402) of 16S rRNA. The chain is Ribosomal RNA small subunit methyltransferase H from Syntrophus aciditrophicus (strain SB).